Consider the following 298-residue polypeptide: Oxygen-dependent coproporphyrinogen-III oxidase (298 aa).

Ser-92 lines the substrate pocket. His-96 and His-106 together coordinate a divalent metal cation. Residue His-106 is the Proton donor of the active site. 108-110 (NVR) lines the substrate pocket. The a divalent metal cation site is built by His-145 and His-175. The tract at residues 239–274 (YVEFNLVYDRGTLFGLQSGGRSESILMSLPPRVRWE) is important for dimerization. 257 to 259 (GGR) provides a ligand contact to substrate.

Belongs to the aerobic coproporphyrinogen-III oxidase family. In terms of assembly, homodimer. Requires a divalent metal cation as cofactor.

Its subcellular location is the cytoplasm. The enzyme catalyses coproporphyrinogen III + O2 + 2 H(+) = protoporphyrinogen IX + 2 CO2 + 2 H2O. It participates in porphyrin-containing compound metabolism; protoporphyrin-IX biosynthesis; protoporphyrinogen-IX from coproporphyrinogen-III (O2 route): step 1/1. Its function is as follows. Involved in the heme biosynthesis. Catalyzes the aerobic oxidative decarboxylation of propionate groups of rings A and B of coproporphyrinogen-III to yield the vinyl groups in protoporphyrinogen-IX. The polypeptide is Oxygen-dependent coproporphyrinogen-III oxidase (Stenotrophomonas maltophilia (strain K279a)).